The following is a 154-amino-acid chain: SsrA-binding protein (154 aa).

A disordered region spans residues 134 to 154; it reads QREDLKRRAEDRDTQRELARF.

This sequence belongs to the SmpB family.

It is found in the cytoplasm. Functionally, required for rescue of stalled ribosomes mediated by trans-translation. Binds to transfer-messenger RNA (tmRNA), required for stable association of tmRNA with ribosomes. tmRNA and SmpB together mimic tRNA shape, replacing the anticodon stem-loop with SmpB. tmRNA is encoded by the ssrA gene; the 2 termini fold to resemble tRNA(Ala) and it encodes a 'tag peptide', a short internal open reading frame. During trans-translation Ala-aminoacylated tmRNA acts like a tRNA, entering the A-site of stalled ribosomes, displacing the stalled mRNA. The ribosome then switches to translate the ORF on the tmRNA; the nascent peptide is terminated with the 'tag peptide' encoded by the tmRNA and targeted for degradation. The ribosome is freed to recommence translation, which seems to be the essential function of trans-translation. This chain is SsrA-binding protein, found in Nitratidesulfovibrio vulgaris (strain ATCC 29579 / DSM 644 / CCUG 34227 / NCIMB 8303 / VKM B-1760 / Hildenborough) (Desulfovibrio vulgaris).